We begin with the raw amino-acid sequence, 473 residues long: Glutamate--tRNA ligase (473 aa).

Positions 10–20 (PSPTGYLHLGN) match the 'HIGH' region motif. The Zn(2+) site is built by cysteine 98, cysteine 100, cysteine 125, and histidine 127. Residues 242-246 (KLSKR) carry the 'KMSKS' region motif. Position 245 (lysine 245) interacts with ATP.

It belongs to the class-I aminoacyl-tRNA synthetase family. Glutamate--tRNA ligase type 1 subfamily. As to quaternary structure, monomer. It depends on Zn(2+) as a cofactor.

Its subcellular location is the cytoplasm. The enzyme catalyses tRNA(Glu) + L-glutamate + ATP = L-glutamyl-tRNA(Glu) + AMP + diphosphate. Functionally, catalyzes the attachment of glutamate to tRNA(Glu) in a two-step reaction: glutamate is first activated by ATP to form Glu-AMP and then transferred to the acceptor end of tRNA(Glu). This Aquifex aeolicus (strain VF5) protein is Glutamate--tRNA ligase.